Consider the following 260-residue polypeptide: Coiled-coil domain-containing protein 127 (260 aa).

Positions 49–135 form a coiled coil; the sequence is QKEVEKEREA…QVMQEKRQVQ (87 aa).

This is Coiled-coil domain-containing protein 127 (CCDC127) from Homo sapiens (Human).